Consider the following 464-residue polypeptide: Glutamate--tRNA ligase (464 aa).

Positions 10–20 (PSPTGYLHIGG) match the 'HIGH' region motif. Positions 113 to 130 (QEAKKEKPRYDGRWRPEA) are enriched in basic and acidic residues. Residues 113 to 142 (QEAKKEKPRYDGRWRPEAGKALPVPPTDVP) form a disordered region. The 'KMSKS' region signature appears at 242–246 (KLSKR). Residue lysine 245 participates in ATP binding.

This sequence belongs to the class-I aminoacyl-tRNA synthetase family. Glutamate--tRNA ligase type 1 subfamily. In terms of assembly, monomer.

The protein resides in the cytoplasm. The catalysed reaction is tRNA(Glu) + L-glutamate + ATP = L-glutamyl-tRNA(Glu) + AMP + diphosphate. Its function is as follows. Catalyzes the attachment of glutamate to tRNA(Glu) in a two-step reaction: glutamate is first activated by ATP to form Glu-AMP and then transferred to the acceptor end of tRNA(Glu). The protein is Glutamate--tRNA ligase of Dechloromonas aromatica (strain RCB).